A 373-amino-acid chain; its full sequence is C-C chemokine receptor type 2 (373 aa).

The Extracellular segment spans residues Met-1–Ala-55. Residues Trp-56–Cys-83 form a helical membrane-spanning segment. Over Lys-84–Tyr-93 the chain is Cytoplasmic. The helical transmembrane segment at Leu-94–Tyr-114 threads the bilayer. Over Ala-115 to Lys-127 the chain is Extracellular. The cysteines at positions 126 and 203 are disulfide-linked. The chain crosses the membrane as a helical span at residues Val-128–Ile-149. Residues Asp-150–Thr-166 are Cytoplasmic-facing. Tyr-152 is subject to Phosphotyrosine; by JAK2. A helical membrane pass occupies residues Val-167–Phe-191. Over Thr-192 to Arg-219 the chain is Extracellular. A helical transmembrane segment spans residues Asn-220–Leu-239. Over His-240–Arg-256 the chain is Cytoplasmic. The chain crosses the membrane as a helical span at residues Leu-257 to Phe-281. At Gln-282–Gln-298 the chain is on the extracellular side. The chain crosses the membrane as a helical span at residues Ala-299 to Gly-322. Topologically, residues Glu-323 to Leu-373 are cytoplasmic.

The protein belongs to the G-protein coupled receptor 1 family. As to quaternary structure, interacts with ARRB1. Interacts (via extracellular N-terminal region) with beta-defensin DEFB106A/DEFB106B; this interaction may preferentially require specific tyrosine sulfation on CCR2. Interacts with NUP85; the interaction is required for CCR2 clusters formation on the cell membrane and CCR2 signaling. In terms of processing, N-glycosylated. Sulfation increases the affinity for both monomeric and dimeric CCL2 with stronger binding to the monomeric form. Binding of sulfated CCR2 to CCL2 promotes conversion of CCL2 from dimer to monomer. In terms of tissue distribution, epressed in mature thymocytes. Detected in monocyte/macrophage cell lines, but not in nonhematopoietic cell lines.

Its subcellular location is the cell membrane. In terms of biological role, key functional receptor for CCL2 but can also bind CCL7 and CCL12 chemokines. Its binding with CCL2 on monocytes and macrophages mediates chemotaxis and migration induction through the activation of the PI3K cascade, the small G protein Rac and lamellipodium protrusion. Also acts as a receptor for the beta-defensin DEFB106A/DEFB106B. Regulates the expression of T-cell inflammatory cytokines and T-cell differentiation, promoting the differentiation of T-cells into T-helper 17 cells (Th17) during inflammation. Facilitates the export of mature thymocytes by enhancing directional movement of thymocytes to sphingosine-1-phosphate stimulation and up-regulation of S1P1R expression; signals through the JAK-STAT pathway to regulate FOXO1 activity leading to an increased expression of S1P1R. Plays an important role in mediating peripheral nerve injury-induced neuropathic pain. Increases NMDA-mediated synaptic transmission in both dopamine D1 and D2 receptor-containing neurons, which may be caused by MAPK/ERK-dependent phosphorylation of GRIN2B/NMDAR2B. Mediates the recruitment of macrophages and monocytes to the injury site following brain injury. The sequence is that of C-C chemokine receptor type 2 (Ccr2) from Mus musculus (Mouse).